We begin with the raw amino-acid sequence, 449 residues long: Omega-amino acid--pyruvate aminotransferase (449 aa).

W60 is a binding site for substrate. 119 to 120 is a binding site for pyridoxal 5'-phosphate; the sequence is GS. At K288 the chain carries N6-(pyridoxal phosphate)lysine. A pyridoxal 5'-phosphate-binding site is contributed by T327. Residues R414 and Q421 each contribute to the substrate site.

The protein belongs to the class-III pyridoxal-phosphate-dependent aminotransferase family. In terms of assembly, homotetramer. Pyridoxal 5'-phosphate is required as a cofactor.

It carries out the reaction 3-oxopropanoate + L-alanine = beta-alanine + pyruvate. Catalyzes transamination between a variety of omega-amino acids, mono and diamines, and pyruvate. Plays a pivotal role in the metabolism of the omega amino acids. The polypeptide is Omega-amino acid--pyruvate aminotransferase (Pseudomonas putida (Arthrobacter siderocapsulatus)).